A 606-amino-acid polypeptide reads, in one-letter code: DNA primase (606 aa).

Residues 40–64 (CPFHQEKTPSFYVVPEKRFYFCHGC) form a CHC2-type zinc finger. Residues 256 to 349 (KAAVLVEGYF…DPDTFARREG (94 aa)) enclose the Toprim domain. The Mg(2+) site is built by Glu-262, Asp-307, and Asp-309. A disordered region spans residues 429–451 (VPLPKPAGGDAPPSSPNRPAPPL). The segment covering 441–451 (PSSPNRPAPPL) has biased composition (pro residues).

The protein belongs to the DnaG primase family. In terms of assembly, monomer. Interacts with DnaB. Zn(2+) serves as cofactor. The cofactor is Mg(2+).

The catalysed reaction is ssDNA + n NTP = ssDNA/pppN(pN)n-1 hybrid + (n-1) diphosphate.. In terms of biological role, RNA polymerase that catalyzes the synthesis of short RNA molecules used as primers for DNA polymerase during DNA replication. The polypeptide is DNA primase (Myxococcus xanthus).